The primary structure comprises 553 residues: Glucose-6-phosphate isomerase (553 aa).

Glu355 functions as the Proton donor in the catalytic mechanism. Catalysis depends on residues His386 and Lys513.

This sequence belongs to the GPI family.

The protein localises to the cytoplasm. It carries out the reaction alpha-D-glucose 6-phosphate = beta-D-fructose 6-phosphate. Its pathway is carbohydrate biosynthesis; gluconeogenesis. The protein operates within carbohydrate degradation; glycolysis; D-glyceraldehyde 3-phosphate and glycerone phosphate from D-glucose: step 2/4. Functionally, catalyzes the reversible isomerization of glucose-6-phosphate to fructose-6-phosphate. The protein is Glucose-6-phosphate isomerase of Baumannia cicadellinicola subsp. Homalodisca coagulata.